We begin with the raw amino-acid sequence, 724 residues long: uncharacterized protein (724 aa).

Disordered stretches follow at residues 1 to 23 (MEDR…IPDN), 166 to 477 (PDGY…PPRD), 496 to 517 (EAHD…AHGP), and 532 to 691 (DHPI…PALS). Composition is skewed to polar residues over residues 227–245 (VSQS…TVNQ) and 270–296 (STTL…TSDA). Residues 304-322 (TRDHDRYGNGRGPDTDRLE) show a composition bias toward basic and acidic residues. Residues 403 to 413 (PSSSHSETPNM) are compositionally biased toward polar residues. Composition is skewed to basic and acidic residues over residues 550–560 (RNHEFTEDKRL) and 637–657 (LRHD…DLAA). Low complexity predominate over residues 682 to 691 (RLAAASPALS).

This is an uncharacterized protein from Neurospora crassa (strain ATCC 24698 / 74-OR23-1A / CBS 708.71 / DSM 1257 / FGSC 987).